A 207-amino-acid polypeptide reads, in one-letter code: MHAEEKLTAETFPAAPERNATLEGKNKFLGFWLFLGGETVLFASLFATYLALKDKTNGGPSAEELFQMPVVFMATMLLLTSSLTSVYAIYHMKNFDFKKMQLWFGITVLLGAGFLGLEIYEFNEYVHEGHKFTTSAFASAFYTLVGTHGSHVAFGLLWILTLMIRNAKRGLNLYNAPKFYVASLYWHFIDVVWVFIFTVVYLMGMVG.

5 helical membrane-spanning segments follow: residues 28-48, 70-90, 102-122, 144-164, and 186-206; these read FLGF…LFAT, VVFM…YAIY, LWFG…IYEF, LVGT…TLMI, and WHFI…MGMV.

It belongs to the cytochrome c oxidase subunit 3 family.

The protein resides in the cell membrane. The enzyme catalyses 4 Fe(II)-[cytochrome c] + O2 + 8 H(+)(in) = 4 Fe(III)-[cytochrome c] + 2 H2O + 4 H(+)(out). The sequence is that of Cytochrome c oxidase subunit 3 (ctaE) from Bacillus sp. (strain PS3).